A 206-amino-acid polypeptide reads, in one-letter code: MFEDRPDRDAEVVLVGRSNVGKSTLMRELTGHDFSTGGKPGVTRQPNHFDWASESFMFTDLPGFGFMSGVEEEHREAIKTNIVRYLEENADSILAGVVVMDGKAAVDIIDRHAERGNIPHDVEMFGFLEDVGVEPIVAVNKTDKIDDLDERLDEICDRLGLYPPWQQWSDQIAPICAKRGDIEALEECLRTRFHEHNRDDLLKFVS.

The region spanning 8–195 is the EngB-type G domain; the sequence is RDAEVVLVGR…EECLRTRFHE (188 aa). GTP is bound by residues 16 to 23, 41 to 45, 60 to 63, 140 to 143, and 175 to 177; these read GRSNVGKS, GVTRQ, DLPG, NKTD, and ICA. Mg(2+) is bound by residues serine 23 and threonine 43.

This sequence belongs to the TRAFAC class TrmE-Era-EngA-EngB-Septin-like GTPase superfamily. EngB GTPase family. Requires Mg(2+) as cofactor.

Necessary for normal cell division and for the maintenance of normal septation. The polypeptide is Probable GTP-binding protein EngB (Halorubrum lacusprofundi (strain ATCC 49239 / DSM 5036 / JCM 8891 / ACAM 34)).